The sequence spans 134 residues: Profilin-3 (134 aa).

Cys13 and Cys118 are disulfide-bonded. Residues 84–100 (AVIRGKKGSGGITIKKT) carry the Involved in PIP2 interaction motif. Thr114 is modified (phosphothreonine).

The protein belongs to the profilin family. Occurs in many kinds of cells as a complex with monomeric actin in a 1:1 ratio. Phosphorylated by MAP kinases.

The protein resides in the cytoplasm. It is found in the cytoskeleton. Its function is as follows. Binds to actin and affects the structure of the cytoskeleton. At high concentrations, profilin prevents the polymerization of actin, whereas it enhances it at low concentrations. The chain is Profilin-3 from Olea europaea (Common olive).